The following is an 891-amino-acid chain: DNA mismatch repair protein MutS (891 aa).

634-641 (GPNMGGKS) is a binding site for ATP.

Belongs to the DNA mismatch repair MutS family.

Functionally, this protein is involved in the repair of mismatches in DNA. It is possible that it carries out the mismatch recognition step. This protein has a weak ATPase activity. In Burkholderia pseudomallei (strain 668), this protein is DNA mismatch repair protein MutS.